A 137-amino-acid polypeptide reads, in one-letter code: Type 3 secretion system pilotin (137 aa).

An N-terminal signal peptide occupies residues 1–14 (MLLPLALLLGGCVS).

This sequence belongs to the ExsB/YscW family.

The protein localises to the cell outer membrane. In terms of biological role, involved in the synthesis of the type III secretion system (T3SS), also called injectisome, which is used to inject bacterial effector proteins into eukaryotic host cells. Pilot protein that is required for the proper localization of the secretin PscC in the outer membrane. Necessary for full in vivo virulence. This is Type 3 secretion system pilotin from Pseudomonas aeruginosa (strain ATCC 15692 / DSM 22644 / CIP 104116 / JCM 14847 / LMG 12228 / 1C / PRS 101 / PAO1).